A 425-amino-acid chain; its full sequence is Dihydroorotase (425 aa).

Residues His59 and His61 each contribute to the Zn(2+) site. Substrate-binding positions include 61-63 (HLR) and Asn93. Positions 151, 178, and 231 each coordinate Zn(2+). Asn277 contacts substrate. Zn(2+) is bound at residue Asp304. Asp304 is a catalytic residue. Substrate contacts are provided by residues His308 and 322 to 323 (FG).

Belongs to the metallo-dependent hydrolases superfamily. DHOase family. Class I DHOase subfamily. Requires Zn(2+) as cofactor.

The enzyme catalyses (S)-dihydroorotate + H2O = N-carbamoyl-L-aspartate + H(+). It functions in the pathway pyrimidine metabolism; UMP biosynthesis via de novo pathway; (S)-dihydroorotate from bicarbonate: step 3/3. Functionally, catalyzes the reversible cyclization of carbamoyl aspartate to dihydroorotate. The polypeptide is Dihydroorotase (Staphylococcus epidermidis (strain ATCC 35984 / DSM 28319 / BCRC 17069 / CCUG 31568 / BM 3577 / RP62A)).